Here is a 312-residue protein sequence, read N- to C-terminus: MTEQTEKDKKQIYNLNKLQKRLRRNVGNAIADFNMIEEGDKVMVCLSGGKDSYTLLDILLNLKFSAPIHFDIVAVNLDQKQPGFPEHVLPQYLESIGVEYKIVEENTYGIVKEKIPEGKTTCSLCSRLRRGILYRTATELGATKIALGHHRDDMLATLFLNMFYGGKLKSMPPKLISDDGKQIVIRPLAYCKEKDIEKYAVAKQFPIIPCNLCGSQPNLQRQVVKEMLNTWDRQYPGRLETMFSAMQNVVPSHLCDPNLFDFKNIRRGQILEGVSGDIAFDKEELPPMPQFADEGESADFSGENLIQFKEVN.

The PP-loop motif motif lies at Ser-47–Ser-52. Residues Cys-122, Cys-125, and Cys-213 each contribute to the [4Fe-4S] cluster site.

Belongs to the TtcA family. As to quaternary structure, homodimer. Mg(2+) is required as a cofactor. It depends on [4Fe-4S] cluster as a cofactor.

Its subcellular location is the cytoplasm. It carries out the reaction cytidine(32) in tRNA + S-sulfanyl-L-cysteinyl-[cysteine desulfurase] + AH2 + ATP = 2-thiocytidine(32) in tRNA + L-cysteinyl-[cysteine desulfurase] + A + AMP + diphosphate + H(+). The protein operates within tRNA modification. Functionally, catalyzes the ATP-dependent 2-thiolation of cytidine in position 32 of tRNA, to form 2-thiocytidine (s(2)C32). The sulfur atoms are provided by the cysteine/cysteine desulfurase (IscS) system. This chain is tRNA-cytidine(32) 2-sulfurtransferase, found in Actinobacillus succinogenes (strain ATCC 55618 / DSM 22257 / CCUG 43843 / 130Z).